The following is a 317-amino-acid chain: Tumor-associated calcium signal transducer 2 (317 aa).

Residues 1-24 (MARGLDLAPLLLLLLAMATRFCTA) form the signal peptide. Over 25–270 (QSNCTCPTNK…QFSMKRLTAG (246 aa)) the chain is Extracellular. N-linked (GlcNAc...) asparagine glycosylation occurs at asparagine 27. The 76-residue stretch at 64–139 (TSKCLLLKAR…TDKGDQSLRC (76 aa)) folds into the Thyroglobulin type-1 domain. Cystine bridges form between cysteine 67–cysteine 102, cysteine 113–cysteine 119, and cysteine 121–cysteine 139. Asparagine 114 is a glycosylation site (N-linked (GlcNAc...) asparagine). N-linked (GlcNAc...) asparagine glycosylation is found at asparagine 162 and asparagine 202. A helical membrane pass occupies residues 271–291 (VIAVIAVVSVAVVAGVVVLVV). Topologically, residues 292 to 317 (TKRRKSGKYKKVELKELGEMRSEPSL) are cytoplasmic.

Belongs to the EPCAM family. In terms of tissue distribution, expressed in kidney, lung, ovary and testis. High levels of expression in immortalized keratinocytes.

It is found in the membrane. In terms of biological role, may function as a growth factor receptor. This is Tumor-associated calcium signal transducer 2 (Tacstd2) from Mus musculus (Mouse).